Here is a 125-residue protein sequence, read N- to C-terminus: Large ribosomal subunit protein bL12 (125 aa).

The protein belongs to the bacterial ribosomal protein bL12 family. Homodimer. Part of the ribosomal stalk of the 50S ribosomal subunit. Forms a multimeric L10(L12)X complex, where L10 forms an elongated spine to which 2 to 4 L12 dimers bind in a sequential fashion. Binds GTP-bound translation factors.

In terms of biological role, forms part of the ribosomal stalk which helps the ribosome interact with GTP-bound translation factors. Is thus essential for accurate translation. The chain is Large ribosomal subunit protein bL12 from Sinorhizobium medicae (strain WSM419) (Ensifer medicae).